We begin with the raw amino-acid sequence, 72 residues long: Small ribosomal subunit protein bS18 (72 aa).

It belongs to the bacterial ribosomal protein bS18 family. As to quaternary structure, part of the 30S ribosomal subunit. Forms a tight heterodimer with protein bS6.

Its function is as follows. Binds as a heterodimer with protein bS6 to the central domain of the 16S rRNA, where it helps stabilize the platform of the 30S subunit. This Francisella tularensis subsp. novicida (strain U112) protein is Small ribosomal subunit protein bS18.